Consider the following 215-residue polypeptide: MNELNAFNEQRAEIYWWLSSLFAHELTKEQLEQYNSFEIRTFLTNLSETPELTDSISSIVTKLNELQTREDAQLELSADFCEAFLGSDKNSALPYASMYLDKSRLLNAKPAQDMRDLLEKYNITQKAEFNEPADHIAIELDFLGNLIVMTNQQTTEPEFEQFMAAQLQFINEQLLSWAPRFNQLCSERDTFGFYAAVTHFLVTFLELDVKFLAGE.

This sequence belongs to the TorD/DmsD family. TorD subfamily.

The protein localises to the cytoplasm. Functionally, involved in the biogenesis of TorA. Acts on TorA before the insertion of the molybdenum cofactor and, as a result, probably favors a conformation of the apoenzyme that is competent for acquiring the cofactor. This chain is Chaperone protein TorD, found in Aliivibrio salmonicida (strain LFI1238) (Vibrio salmonicida (strain LFI1238)).